The sequence spans 252 residues: Auxin-induced in root cultures protein 12 (252 aa).

The N-terminal stretch at Met-1–Ser-25 is a signal peptide. Residues Leu-49–Gly-165 enclose the DOMON domain. Asn-58 and Asn-61 each carry an N-linked (GlcNAc...) asparagine glycan. Met-91 is a heme binding site. Residues Asn-114 and Asn-167 are each glycosylated (N-linked (GlcNAc...) asparagine). His-176 is a heme binding site. The segment at Glu-193–Pro-224 is disordered. The span at Ala-195–Thr-219 shows a compositional bias: low complexity. Residue Asn-226 is the site of GPI-anchor amidated asparagine attachment. Residues Ala-227 to Phe-252 constitute a propeptide, removed in mature form.

Heme is required as a cofactor.

The protein localises to the cell membrane. Functionally, one-heme-containing cytochrome. The protein is Auxin-induced in root cultures protein 12 (AIR12) of Arabidopsis thaliana (Mouse-ear cress).